Reading from the N-terminus, the 2314-residue chain is Protein Ycf2 (2314 aa).

Residue 1653 to 1660 (GSIGTGRS) participates in ATP binding.

Belongs to the Ycf2 family.

The protein localises to the plastid. Its subcellular location is the chloroplast stroma. Its function is as follows. Probable ATPase of unknown function. Its presence in a non-photosynthetic plant (Epifagus virginiana) and experiments in tobacco indicate that it has an essential function which is probably not related to photosynthesis. The sequence is that of Protein Ycf2 from Piper cenocladum (Ant piper).